The following is a 727-amino-acid chain: Probable copper-importing P-type ATPase A (727 aa).

Residues 1–94 (MATNTKMETF…QTYLRKMKFD (94 aa)) are Cytoplasmic-facing. An HMA domain is found at 6 to 70 (KMETFVITGM…SVENIGYGAI (65 aa)). The Cu(+) site is built by Cys17 and Cys20. The chain crosses the membrane as a helical span at residues 95–115 (LIFSAILTLPLMLAMIAMMLG). Residues 116–119 (SHGP) lie on the Extracellular side of the membrane. Residues 120–137 (IVSFFHLSLVQLLFALPV) form a helical membrane-spanning segment. The Cytoplasmic portion of the chain corresponds to 138–161 (QFYVGWRFYKGAYHALKTKAPNMD). The helical transmembrane segment at 162–181 (VLVAIGTSAAFALSIYNGFF) threads the bilayer. Topologically, residues 182–187 (PSHSHD) are extracellular. The helical transmembrane segment at 188-203 (LYFESSSMIITLILLG) threads the bilayer. Over 204-341 (KYLEHTAKSK…PIQQIADKIS (138 aa)) the chain is Cytoplasmic. A helical membrane pass occupies residues 342–362 (GIFVPIVLFLALVTLLVTGWL). The Extracellular segment spans residues 363–375 (TKDWQLALLHSVS). The helical transmembrane segment at 376-396 (VLVIACPCALGLATPTAIMVG) threads the bilayer. At 397–678 (TGVGAHNGIL…AATLKKIKQN (282 aa)) the chain is on the cytoplasmic side. Asp425 serves as the catalytic 4-aspartylphosphate intermediate. Asp621 and Asp625 together coordinate Mg(2+). A helical membrane pass occupies residues 679 to 698 (LFWAFIYNTIGIPFAAFGFL). Over 699 to 700 (NP) the chain is Extracellular. The chain crosses the membrane as a helical span at residues 701–721 (IIAGGAMAFSSISVLLNSLSL). At 722–727 (NRKTIK) the chain is on the cytoplasmic side.

Belongs to the cation transport ATPase (P-type) (TC 3.A.3) family. Type IB subfamily. In terms of assembly, monomer. Interacts with the copper chaperone CopZ.

Its subcellular location is the cell membrane. It carries out the reaction Cu(+)(in) + ATP + H2O = Cu(+)(out) + ADP + phosphate + H(+). Inhibited by vanadate. Probably involved in copper import under copper limiting conditions. The protein is Probable copper-importing P-type ATPase A (copA) of Enterococcus hirae (strain ATCC 9790 / DSM 20160 / JCM 8729 / LMG 6399 / NBRC 3181 / NCIMB 6459 / NCDO 1258 / NCTC 12367 / WDCM 00089 / R).